An 855-amino-acid chain; its full sequence is Pre-mRNA-splicing factor SYF1 (855 aa).

HAT repeat units lie at residues 15-47 (LVFE…FKQG), 48-80 (APKP…ARRA), 90-122 (PAYE…FLMD), 124-158 (GRVT…FLRS), 160-192 (PLPE…SSDR), 198-230 (QRLA…LISQ), 235-268 (VQSL…YYIR), 270-305 (GHFE…FEES), and 369-407 (GRPR…FYED). N6-acetyllysine is present on lysine 420. 5 HAT repeats span residues 498–530 (GTFQ…FLEE), 532–566 (KYFE…KFIS), 571–605 (RKLE…LEEE), 643–677 (YGVT…MECK), and 679–713 (GEID…FEVR). The disordered stretch occupies residues 808–855 (AELAQQANPEEIQLGEDEDEDEMDLEPNEVRLEQQSVPAAVFGSLKED). Acidic residues predominate over residues 820–834 (QLGEDEDEDEMDLEP). Serine 851 carries the phosphoserine modification.

It belongs to the crooked-neck family. As to quaternary structure, associates with RNA polymerase II, the TCR-specific proteins CKN1/CSA and ERCC6/CSB, and XPA. Identified in the spliceosome C complex. Component of the XAB2 complex, a multimeric protein complex composed of XAB2, PRPF19, AQR, ZNF830, ISY1, and PPIE. Identified in a pentameric intron-binding (IB) complex composed of AQR, XAB2, ISY1, ZNF830 and PPIE that is incorporated into the spliceosome as a preassembled complex. The IB complex does not contain PRPF19.

The protein resides in the nucleus. Its function is as follows. Involved in pre-mRNA splicing as component of the spliceosome. Involved in transcription-coupled repair (TCR), transcription and pre-mRNA splicing. This chain is Pre-mRNA-splicing factor SYF1 (Xab2), found in Mus musculus (Mouse).